The chain runs to 133 residues: Small ribosomal subunit protein uS8 (133 aa).

Belongs to the universal ribosomal protein uS8 family. Part of the 30S ribosomal subunit. Contacts proteins S5 and S12.

Its function is as follows. One of the primary rRNA binding proteins, it binds directly to 16S rRNA central domain where it helps coordinate assembly of the platform of the 30S subunit. The polypeptide is Small ribosomal subunit protein uS8 (Synechococcus elongatus (strain ATCC 33912 / PCC 7942 / FACHB-805) (Anacystis nidulans R2)).